The chain runs to 287 residues: HTH-type transcriptional regulator MurR (287 aa).

In terms of domain architecture, HTH rpiR-type spans 1–77 (MLYLAKMRNA…MALIEEHSVS (77 aa)). A DNA-binding region (H-T-H motif) is located at residues 37–56 (SRNMAKQLEISQSSIVKFAQ). The 141-residue stretch at 128–268 (VINLISKAPL…FVGMVQLNDV (141 aa)) folds into the SIS domain.

Homotetramer.

It participates in amino-sugar metabolism; N-acetylmuramate degradation [regulation]. Represses the expression of the murPQ operon involved in the uptake and degradation of N-acetylmuramic acid (MurNAc). Binds to two adjacent inverted repeats within the operator region. MurNAc 6-phosphate, the substrate of MurQ, is the specific inducer that weakens binding of MurR to the operator. The sequence is that of HTH-type transcriptional regulator MurR from Salmonella arizonae (strain ATCC BAA-731 / CDC346-86 / RSK2980).